A 1079-amino-acid chain; its full sequence is MPRVHNIKKSLTPHISCVTNESDNLLDFLPDRLRAKLLPFQKDGIIFALKRNGRCMVADEMGLGKTIQAIGITYFYKEEWPLLIVVPSSLRYPWTEEIEKWIPELSPEEINVIQNKTDVRRMSTSKVTVLGYGLLTADAKTLIDALNNQNFKVVIVDESHYMKSRNATRSRILLPIVQKARRAILLTGTPALGRPEELFMQIEALFPQKFGRWTDYAKRYCNAHIRYFGKRPQWDCRGASNLNELHQLLSDIMIRRLKTEVLTQLPPKVRQRIPFDLPSAAAKELNTSFEEWEKIMRTPNSGAMETVMGLITRMFKQTAIAKAGAVKDYIKMMLQNDSLKFLVFAHHLSMLQACTEAVIENKTRYIRIDGSVSSSERIHLVNQFQKDPDTRVAILSIQAAGQGLTFTAASHVVFAELYWDPGHIKQAEDRAHRIGQCSSVNIHYLIANGTLDTLMWGMLNRKAQVTGSTLNGRKEKIQAEEGDKEKWDFLQFAEAWTPNDSSEELRKEALFTHFEKEKQHDIRSFFVPQPKKRQLMTSCDESKRFREENTVVSSDPTKTAARDIIDYESDVEPETKRLKLAASEDHCSPSEETPSQSKQIRTPLVESVQEAKAQLTTPAFPVEGWQCSLCTYINNSELPYCEMCETPQGSAVMQIDSLNHIQDKNEKDDSQKDTSKKVQTISDCEKQALAQSEPGQLADSKEETPKIEKEDGLTSQPGNEQWKSSDTLPVYDTLMFCASRNTDRIHIYTKDGKQMSCNFIPLDIKLDLWEDLPASFQLKQYRSLILRFVREWSSLTAMKQRIIRKSGQLFCSPILALEEITKQQTKQNCTKRYITKEDVAVASMDKVKNVGGHVRLITKESRPRDPFTKKLLEDGACVPFLNPYTVQADLTVKPSTSKGYLQAVDNEGNPLCLRCQQPTCQTKQACKANSWDSRFCSLKCQEEFWIRSNNSYLRAKVFETEHGVCQLCNVNAQELFLRLRDAPKSQRKNLLYATWTSKLPLEQLNEMIRNPGEGHFWQVDHIKPVYGGGGQCSLDNLQTLCTVCHKERTARQAKERSQVRRQSLASKHGSDITRFLVKK.

One can recognise a Helicase ATP-binding domain in the interval 46-208; sequence IFALKRNGRC…FMQIEALFPQ (163 aa). Residues 46–481 are DNA annealing helicase activity; it reads IFALKRNGRC…GRKEKIQAEE (436 aa). ATP is bound at residue 59–66; the sequence is DEMGLGKT. The short motif at 157 to 160 is the DEAH box element; sequence DESH. One can recognise a Helicase C-terminal domain in the interval 325-481; the sequence is AVKDYIKMML…GRKEKIQAEE (157 aa). Residues 519-526 carry the PIP-box motif; it reads QHDIRSFF. Serine 569 is modified (phosphoserine). The segment at 582 to 601 is disordered; it reads ASEDHCSPSEETPSQSKQIR. Residues 590–600 show a composition bias toward polar residues; that stretch reads SEETPSQSKQI. The RanBP2-type zinc-finger motif lies at 621 to 650; that stretch reads PVEGWQCSLCTYINNSELPYCEMCETPQGS. At cysteine 630 the chain carries (Microbial infection) S-methylcysteine. The tract at residues 689–725 is disordered; the sequence is LAQSEPGQLADSKEETPKIEKEDGLTSQPGNEQWKSS. Residues 699 to 712 show a composition bias toward basic and acidic residues; that stretch reads DSKEETPKIEKEDG. Polar residues predominate over residues 713–725; sequence LTSQPGNEQWKSS. The HNH domain maps to 1011–1051; that stretch reads PGEGHFWQVDHIKPVYGGGGQCSLDNLQTLCTVCHKERTAR. The tract at residues 1011 to 1079 is endonuclease activity; the sequence is PGEGHFWQVD…SDITRFLVKK (69 aa). Residues 1074–1078 carry the APIM motif motif; the sequence is RFLVK.

The protein belongs to the SNF2/RAD54 helicase family. As to quaternary structure, interacts (via PIP-box and RanBP2-type zinc finger) with PCNA (when PCNA is polyubiquitinated via 'Lys-63'-linked polyubiquitin). In terms of processing, (Microbial infection) Methylation at Cys-630 by enteropathogenic E.coli protein NleE or S.flexneri protein OspZ: methylation disrupts ability to bind 'Lys-63'-linked ubiquitin.

Its subcellular location is the nucleus. The protein resides in the chromosome. In terms of biological role, DNA annealing helicase and endonuclease required to maintain genome stability at stalled or collapsed replication forks by facilitating fork restart and limiting inappropriate recombination that could occur during template switching events. Recruited to the sites of stalled DNA replication by polyubiquitinated PCNA and acts as a structure-specific endonuclease that cleaves the replication fork D-loop intermediate, generating an accessible 3'-OH group in the template of the leading strand, which is amenable to extension by DNA polymerase. In addition to endonuclease activity, also catalyzes the fork regression via annealing helicase activity in order to prevent disintegration of the replication fork and the formation of double-strand breaks. The chain is DNA annealing helicase and endonuclease ZRANB3 from Homo sapiens (Human).